A 205-amino-acid chain; its full sequence is Large ribosomal subunit protein uL4 (205 aa).

The span at alanine 43–threonine 60 shows a compositional bias: polar residues. Residues alanine 43–asparagine 96 are disordered. The span at lysine 62–serine 74 shows a compositional bias: basic residues.

This sequence belongs to the universal ribosomal protein uL4 family. Part of the 50S ribosomal subunit.

Functionally, one of the primary rRNA binding proteins, this protein initially binds near the 5'-end of the 23S rRNA. It is important during the early stages of 50S assembly. It makes multiple contacts with different domains of the 23S rRNA in the assembled 50S subunit and ribosome. Forms part of the polypeptide exit tunnel. In Thiobacillus denitrificans (strain ATCC 25259 / T1), this protein is Large ribosomal subunit protein uL4.